We begin with the raw amino-acid sequence, 65 residues long: Prokaryotic ubiquitin-like protein Pup (65 aa).

Over residues 1–13 (MAQEQKQPRKSSE) the composition is skewed to basic and acidic residues. Positions 1 to 34 (MAQEQKQPRKSSEADEAVEAVAETDVSERKEALD) are disordered. The segment at 21–59 (VAETDVSERKEALDSDVDDILDEIDDVLETNAEDFVKSF) is ARC ATPase binding. Positions 25-49 (DVSERKEALDSDVDDILDEIDDVLE) form a coiled coil. Glutamate 65 participates in a covalent cross-link: Isoglutamyl lysine isopeptide (Glu-Lys) (interchain with K-? in acceptor proteins).

Belongs to the prokaryotic ubiquitin-like protein family. As to quaternary structure, strongly interacts with the proteasome-associated ATPase ARC through a hydrophobic interface; the interacting region of Pup lies in its C-terminal half. There is one Pup binding site per ARC hexamer ring.

The protein operates within protein degradation; proteasomal Pup-dependent pathway. Its function is as follows. Protein modifier that is covalently attached to lysine residues of substrate proteins, thereby targeting them for proteasomal degradation. The tagging system is termed pupylation. The protein is Prokaryotic ubiquitin-like protein Pup of Nocardioides sp. (strain ATCC BAA-499 / JS614).